A 421-amino-acid polypeptide reads, in one-letter code: Core protease I7 homolog (421 aa).

Catalysis depends on residues His-242, Asp-249, and Cys-329.

The protein belongs to the peptidase C57 family.

It localises to the virion. In terms of biological role, late protein responsible for processing most or all of the viral core and membrane proteins known to undergo morphogenesis-associated proteolysis. These proteolytic events are involved in the transformation of immature virions (IV) into mature virions (MV). The chain is Core protease I7 homolog from Fowlpox virus (strain NVSL) (FPV).